The primary structure comprises 160 residues: Cytochrome b6-f complex subunit 4 (160 aa).

Helical transmembrane passes span 36-56, 95-115, and 131-151; these read LLYIFPVCIFGTFAIVIGLSV, LLGVLLMAAVPAGLLTVPFIE, and TVFLLGTVVAVYLGIGSTFPI.

Belongs to the cytochrome b family. PetD subfamily. The 4 large subunits of the cytochrome b6-f complex are cytochrome b6, subunit IV (17 kDa polypeptide, petD), cytochrome f and the Rieske protein, while the 4 small subunits are petG, petL, petM and petN. The complex functions as a dimer.

Its subcellular location is the plastid. It is found in the chloroplast thylakoid membrane. In terms of biological role, component of the cytochrome b6-f complex, which mediates electron transfer between photosystem II (PSII) and photosystem I (PSI), cyclic electron flow around PSI, and state transitions. The sequence is that of Cytochrome b6-f complex subunit 4 from Stigeoclonium helveticum (Green alga).